A 216-amino-acid chain; its full sequence is Protein GrpE (216 aa).

2 disordered regions span residues 1 to 45 (MTEE…LDPT) and 185 to 216 (RVAV…TEEV). Over residues 205–216 (TDDEESGGTEEV) the composition is skewed to acidic residues.

Belongs to the GrpE family. Homodimer.

It localises to the cytoplasm. Functionally, participates actively in the response to hyperosmotic and heat shock by preventing the aggregation of stress-denatured proteins, in association with DnaK and GrpE. It is the nucleotide exchange factor for DnaK and may function as a thermosensor. Unfolded proteins bind initially to DnaJ; upon interaction with the DnaJ-bound protein, DnaK hydrolyzes its bound ATP, resulting in the formation of a stable complex. GrpE releases ADP from DnaK; ATP binding to DnaK triggers the release of the substrate protein, thus completing the reaction cycle. Several rounds of ATP-dependent interactions between DnaJ, DnaK and GrpE are required for fully efficient folding. The polypeptide is Protein GrpE (Streptomyces griseus subsp. griseus (strain JCM 4626 / CBS 651.72 / NBRC 13350 / KCC S-0626 / ISP 5235)).